The chain runs to 83 residues: Protein CASPARIAN STRIP INTEGRITY FACTOR 1 (83 aa).

The N-terminal stretch at 1 to 22 (MGMSPLTVKKLGFIFMIVSASA) is a signal peptide. A disordered region spans residues 59–83 (MNTKDYGNNSPSPRLERPPFKLIPN). Y64 is modified (sulfotyrosine). Hydroxyproline occurs at positions 69 and 71.

As to quaternary structure, interacts with the specific receptor kinases GSO1 and GSO2. As to expression, expressed exclusively in the root stele.

In terms of biological role, peptide hormone required for contiguous Casparian strip diffusion barrier formation in roots via the regulation of CASPs protein expression and distribution in a GSO1-GSO2 signaling pathway. The Casparian strip is required for ion homeostasis (e.g. iron and potassium ions). In Arabidopsis thaliana (Mouse-ear cress), this protein is Protein CASPARIAN STRIP INTEGRITY FACTOR 1.